Consider the following 234-residue polypeptide: BTB/POZ domain-containing protein KCTD5 (234 aa).

Ala2 is modified (N-acetylalanine). Positions 44 to 146 constitute a BTB domain; the sequence is KWVRLNVGGT…LVKDKIRERD (103 aa). The tract at residues 213–234 is disordered; it reads PYGTTSEPSEKAKILQERGSRM. The segment covering 220 to 234 has biased composition (basic and acidic residues); sequence PSEKAKILQERGSRM.

As to quaternary structure, homopentamer. Interacts (via C-terminus) with GRASP55/GORASP2. Interacts with CUL3 and with ubiquitinated proteins. Interacts with CRY1.

It localises to the cytoplasm. Its subcellular location is the cytosol. The protein localises to the nucleus. In terms of biological role, its interaction with CUL3 suggests that it may act as a substrate adapter in some E3 ligase complex. Does not affect the function of Kv channel Kv2.1/KCNB1, Kv1.2/KCNA2, Kv4.2/KCND2 and Kv3.4/KCNC4. In Rattus norvegicus (Rat), this protein is BTB/POZ domain-containing protein KCTD5 (Kctd5).